The primary structure comprises 307 residues: Streptomycin 6-kinase (307 aa).

Residue 133–145 (LAGLLARLVSVPA) coordinates streptomycin. The active-site Proton acceptor is the D201.

The protein belongs to the aminoglycoside phosphotransferase family.

It catalyses the reaction streptomycin + ATP = streptomycin 6-phosphate + ADP + H(+). The aminoglycoside phosphotransferases achieve inactivation of their antibiotic substrates by phosphorylation. The sequence is that of Streptomycin 6-kinase (sph) from Streptomyces glaucescens.